Here is a 113-residue protein sequence, read N- to C-terminus: ATP-dependent Clp protease adapter protein ClpS (113 aa).

The protein belongs to the ClpS family. In terms of assembly, binds to the N-terminal domain of the chaperone ClpA.

In terms of biological role, involved in the modulation of the specificity of the ClpAP-mediated ATP-dependent protein degradation. The polypeptide is ATP-dependent Clp protease adapter protein ClpS (Corynebacterium diphtheriae (strain ATCC 700971 / NCTC 13129 / Biotype gravis)).